An 868-amino-acid polypeptide reads, in one-letter code: Alanine--tRNA ligase (868 aa).

His553, His557, Cys657, and His661 together coordinate Zn(2+). The disordered stretch occupies residues 831–851 (GGKGGGRADMAQAGGSRPQAL).

It belongs to the class-II aminoacyl-tRNA synthetase family. It depends on Zn(2+) as a cofactor.

It localises to the cytoplasm. It catalyses the reaction tRNA(Ala) + L-alanine + ATP = L-alanyl-tRNA(Ala) + AMP + diphosphate. Catalyzes the attachment of alanine to tRNA(Ala) in a two-step reaction: alanine is first activated by ATP to form Ala-AMP and then transferred to the acceptor end of tRNA(Ala). Also edits incorrectly charged Ser-tRNA(Ala) and Gly-tRNA(Ala) via its editing domain. The protein is Alanine--tRNA ligase of Chromohalobacter salexigens (strain ATCC BAA-138 / DSM 3043 / CIP 106854 / NCIMB 13768 / 1H11).